Consider the following 539-residue polypeptide: GMP synthase [glutamine-hydrolyzing] (539 aa).

Residues 4-202 enclose the Glutamine amidotransferase type-1 domain; that stretch reads KILILDFGSQ…VLQIAGAKPD (199 aa). Residue Cys81 is the Nucleophile of the active site. Catalysis depends on residues His176 and Glu178. The region spanning 203–395 is the GMPS ATP-PPase domain; it reads WIMKNHIEEA…LGLPPEMVYR (193 aa). 230-236 serves as a coordination point for ATP; that stretch reads SGGVDSS.

Homodimer.

It carries out the reaction XMP + L-glutamine + ATP + H2O = GMP + L-glutamate + AMP + diphosphate + 2 H(+). It functions in the pathway purine metabolism; GMP biosynthesis; GMP from XMP (L-Gln route): step 1/1. Its function is as follows. Catalyzes the synthesis of GMP from XMP. This chain is GMP synthase [glutamine-hydrolyzing], found in Burkholderia cenocepacia (strain ATCC BAA-245 / DSM 16553 / LMG 16656 / NCTC 13227 / J2315 / CF5610) (Burkholderia cepacia (strain J2315)).